The chain runs to 246 residues: Probable septum site-determining protein MinC (246 aa).

This sequence belongs to the MinC family. In terms of assembly, interacts with MinD and FtsZ.

Its function is as follows. Cell division inhibitor that blocks the formation of polar Z ring septums. Rapidly oscillates between the poles of the cell to destabilize FtsZ filaments that have formed before they mature into polar Z rings. Prevents FtsZ polymerization. The polypeptide is Probable septum site-determining protein MinC (Pseudomonas syringae pv. tomato (strain ATCC BAA-871 / DC3000)).